Reading from the N-terminus, the 278-residue chain is MAIKVYKPTSNGRRNMTSSDFAEITKSKPEKTLLASKSKTAGRNSYGHITVRHRGGGHKQQYRIIDFKRTKDNVKAKIVAIEYDPNRSANIALLHYTDGTKAYILAPKGLTVGSWVESGVDADIKVGNALPLKNIPTGTEVHNIELKPGKGGQIARSAGTSAQVLGVDGKYTQVRLQSGEVREILSECRATIGAVGNEQHSLINIGKAGRSRWMGKRPQSRGSVMNPNDHPHGGGEGKAPVGRPQPMTPWGKKSRGIKTRDSKKASEKLIIRHRKGRK.

The tract at residues 208–278 (AGRSRWMGKR…LIIRHRKGRK (71 aa)) is disordered. The segment covering 209 to 219 (GRSRWMGKRPQ) has biased composition (basic residues). The span at 258–270 (KTRDSKKASEKLI) shows a compositional bias: basic and acidic residues.

This sequence belongs to the universal ribosomal protein uL2 family. In terms of assembly, part of the 50S ribosomal subunit. Forms a bridge to the 30S subunit in the 70S ribosome.

Functionally, one of the primary rRNA binding proteins. Required for association of the 30S and 50S subunits to form the 70S ribosome, for tRNA binding and peptide bond formation. It has been suggested to have peptidyltransferase activity; this is somewhat controversial. Makes several contacts with the 16S rRNA in the 70S ribosome. The protein is Large ribosomal subunit protein uL2 of Lactobacillus delbrueckii subsp. bulgaricus (strain ATCC 11842 / DSM 20081 / BCRC 10696 / JCM 1002 / NBRC 13953 / NCIMB 11778 / NCTC 12712 / WDCM 00102 / Lb 14).